The chain runs to 94 residues: Large ribosomal subunit protein uL23 (94 aa).

The protein belongs to the universal ribosomal protein uL23 family. Part of the 50S ribosomal subunit. Contacts protein L29, and trigger factor when it is bound to the ribosome.

In terms of biological role, one of the early assembly proteins it binds 23S rRNA. One of the proteins that surrounds the polypeptide exit tunnel on the outside of the ribosome. Forms the main docking site for trigger factor binding to the ribosome. The sequence is that of Large ribosomal subunit protein uL23 from Pelobacter propionicus (strain DSM 2379 / NBRC 103807 / OttBd1).